A 123-amino-acid polypeptide reads, in one-letter code: Ferredoxin-5 (123 aa).

The 118-residue stretch at 2–119 (PNITFTSPIM…DVMVHFTGTP (118 aa)) folds into the 2Fe-2S ferredoxin-type domain. [2Fe-2S] cluster-binding residues include Cys-42, Cys-47, Cys-50, and Cys-102.

It belongs to the 2Fe2S plant-type ferredoxin family. The cofactor is [2Fe-2S] cluster.

Functionally, ferredoxins are iron-sulfur proteins that transfer electrons in a wide variety of metabolic reactions. This ferredoxin probably participates in nitrogen fixation. This chain is Ferredoxin-5 (fdxD), found in Rhodobacter capsulatus (Rhodopseudomonas capsulata).